We begin with the raw amino-acid sequence, 511 residues long: uncharacterized protein (511 aa).

A run of 14 helical transmembrane segments spans residues 7–27, 46–66, 80–100, 107–127, 134–154, 163–183, 200–220, 226–246, 266–286, 301–321, 329–349, 357–377, 394–414, and 437–457; these read WVISLLAVLAVGPGLMSNTAL, VNPILIGNMAFALLVPAGPLL, LPVFILGSLLIACSGDIALMA, GAATGVMLMIMIPMLVLSFPI, LLVLIGGFYGSVIIGTILGTI, WLFFIFGTLSLIGVAVSYFFL, AGILLSVFLAAASAVSFIFLQ, SGYVWIGFGVTLCLLIGLLIV, VLGLLIIAAGTITVAVSLSAF, LILLSLTLLIGVAIAAILSAL, GMLGIIGGLILVFVNFQWLHI, MFAALFIMLAAGTGLTVAAGL, TAVQFLRLFVYMGVPILIGFF, and LFFISFILSVLLVCLSFCMNA. The interval 465-486 is disordered; that stretch reads AHKPHDKAKTAPEKPAVSAQGL.

This sequence belongs to the major facilitator superfamily.

Its subcellular location is the cell membrane. This is an uncharacterized protein from Bacillus subtilis (strain 168).